Reading from the N-terminus, the 335-residue chain is Partner of xrn-2 protein 1 (335 aa).

An XRN2-binding (XTBD) domain is found at 7-91; it reads VEAEKKLWES…SYVKASAAKK (85 aa). Residues 95–119 are disordered; it reads VKTSDLEGASDESKKVKMEKSPSPV. The span at 105-114 shows a compositional bias: basic and acidic residues; it reads DESKKVKMEK.

Interacts (via N-terminus) with xrn-2; the interaction is direct.

The protein resides in the nucleus. The protein localises to the nucleolus. It is found in the nucleoplasm. Plays a role in maintenance of steady-state concentration and turnover of microRNAs (miRNA) by degradation of mature miRNA in complex with the exoribonuclease xrn-2. Stabilizes and enhances the accumulation and activity of the exoribonuclease xrn-2, and thus contributes to miRNA turnover. In Caenorhabditis elegans, this protein is Partner of xrn-2 protein 1.